We begin with the raw amino-acid sequence, 152 residues long: Ribosome maturation factor RimP (152 aa).

Belongs to the RimP family.

The protein localises to the cytoplasm. Required for maturation of 30S ribosomal subunits. In Idiomarina loihiensis (strain ATCC BAA-735 / DSM 15497 / L2-TR), this protein is Ribosome maturation factor RimP.